Consider the following 290-residue polypeptide: Formamidopyrimidine-DNA glycosylase (290 aa).

Pro2 functions as the Schiff-base intermediate with DNA in the catalytic mechanism. Residue Glu3 is the Proton donor of the active site. The active-site Proton donor; for beta-elimination activity is Lys58. 3 residues coordinate DNA: His98, Arg126, and Arg171. An FPG-type zinc finger spans residues Phe256–His290. The active-site Proton donor; for delta-elimination activity is Arg280.

It belongs to the FPG family. As to quaternary structure, monomer. Requires Zn(2+) as cofactor.

It catalyses the reaction Hydrolysis of DNA containing ring-opened 7-methylguanine residues, releasing 2,6-diamino-4-hydroxy-5-(N-methyl)formamidopyrimidine.. The enzyme catalyses 2'-deoxyribonucleotide-(2'-deoxyribose 5'-phosphate)-2'-deoxyribonucleotide-DNA = a 3'-end 2'-deoxyribonucleotide-(2,3-dehydro-2,3-deoxyribose 5'-phosphate)-DNA + a 5'-end 5'-phospho-2'-deoxyribonucleoside-DNA + H(+). Its function is as follows. Involved in base excision repair of DNA damaged by oxidation or by mutagenic agents. Acts as a DNA glycosylase that recognizes and removes damaged bases. Has a preference for oxidized purines, such as 7,8-dihydro-8-oxoguanine (8-oxoG). Has AP (apurinic/apyrimidinic) lyase activity and introduces nicks in the DNA strand. Cleaves the DNA backbone by beta-delta elimination to generate a single-strand break at the site of the removed base with both 3'- and 5'-phosphates. The protein is Formamidopyrimidine-DNA glycosylase of Cupriavidus taiwanensis (strain DSM 17343 / BCRC 17206 / CCUG 44338 / CIP 107171 / LMG 19424 / R1) (Ralstonia taiwanensis (strain LMG 19424)).